Here is a 1373-residue protein sequence, read N- to C-terminus: Insulin-like growth factor 1 receptor (1373 aa).

The N-terminal stretch at 1–30 (MKSGSGGGSPTSLWGLVFLSAALSLWPTSG) is a signal peptide. Cysteines 33 and 52 form a disulfide. N-linked (GlcNAc...) asparagine glycans are attached at residues N51, N102, and N135. 13 cysteine pairs are disulfide-bonded: C150–C178, C182–C205, C192–C211, C215–C224, C219–C230, C231–C239, C235–C248, C251–C260, C264–C276, C282–C303, C307–C321, C324–C328, and C332–C354. N-linked (GlcNAc...) asparagine glycosylation occurs at N245. An N-linked (GlcNAc...) asparagine glycan is attached at N314. N-linked (GlcNAc...) asparagine glycosylation is found at N418 and N439. A disulfide bridge connects residues C456 and C489. Fibronectin type-III domains follow at residues 490–610 (ESDV…TNAS), 611–709 (VPSI…TEAE), 735–829 (RPER…TMPA), and 835–928 (IPGP…VPAK). N535, N608, N623, N641, N748, N757, N765, N901, and N914 each carry an N-linked (GlcNAc...) asparagine glycan. The Extracellular segment spans residues 742-936 (DVMQVANTTM…AKTTYENFMH (195 aa)). The helical transmembrane segment at 937 to 960 (LIIALPVAILLIVGGLVIMLYVFH) threads the bilayer. Residues 961–1373 (RKRNNSRLGN…ALPLPQSSTC (413 aa)) are Cytoplasmic-facing. An IRS1- and SHC1-binding motif is present at residues 978–981 (NPEY). Y981 carries the phosphotyrosine modification. The 277-residue stretch at 1000–1276 (ITMNRELGQG…SIKDEMEPSF (277 aa)) folds into the Protein kinase domain. Residues 1006-1014 (LGQGSFGMV) and K1034 contribute to the ATP site. Residue D1137 is the Proton acceptor of the active site. Phosphotyrosine; by autocatalysis is present on residues Y1163, Y1167, and Y1168. Residues K1170 and K1173 each participate in a glycyl lysine isopeptide (Lys-Gly) (interchain with G-Cter in ubiquitin) cross-link. S1280 bears the Phosphoserine; by GSK3-beta mark. The interval 1283 to 1373 (YSEENKPPEP…ALPLPQSSTC (91 aa)) is disordered. Position 1284 is a phosphoserine (S1284). The segment covering 1292-1305 (PEELEMELEMEPEN) has biased composition (acidic residues). Residues 1306–1322 (MESVPLDPSASSASLPL) show a composition bias toward low complexity. Basic and acidic residues predominate over residues 1323-1332 (PERHSGHKAE).

The protein belongs to the protein kinase superfamily. Tyr protein kinase family. Insulin receptor subfamily. In terms of assembly, tetramer of 2 alpha and 2 beta chains linked by disulfide bonds. The alpha chains contribute to the formation of the ligand-binding domain, while the beta chain carries the kinase domain. Interacts with PIK3R1 and with the PTB/PID domains of IRS1 and SHC1 in vitro when autophosphorylated on tyrosine residues. Forms a hybrid receptor with INSR, the hybrid is a tetramer consisting of 1 alpha chain and 1 beta chain of INSR and 1 alpha chain and 1 beta chain of IGF1R. Interacts with ARRB1 and ARRB2. Interacts with GRB10. Interacts with RACK1. Interacts with SOCS1, SOCS2 and SOCS3. Interacts with 14-3-3 proteins. Interacts with NMD2. Interacts with MAP3K5. Interacts with STAT3. Found in a ternary complex with IGF1 and ITGAV:ITGB3 or ITGA6:ITGB4. Interacts (nascent precursor form) with ZFAND2B. Post-translationally, autophosphorylated on tyrosine residues in response to ligand binding. Autophosphorylation occurs in trans, i.e. one subunit of the dimeric receptor phosphorylates tyrosine residues on the other subunit. Autophosphorylation occurs in a sequential manner; Tyr-1167 is predominantly phosphorylated first, followed by phosphorylation of Tyr-1163 and Tyr-1168. While every single phosphorylation increases kinase activity, all three tyrosine residues in the kinase activation loop (Tyr-1163, Tyr-1167 and Tyr-1168) have to be phosphorylated for optimal activity. Can be autophosphorylated at additional tyrosine residues (in vitro). Autophosphorylated is followed by phosphorylation of juxtamembrane tyrosines and C-terminal serines. May also be phosphorylated at Tyr-1163 and Tyr-1168 by mTORC2. Phosphorylation of Tyr-981 is required for IRS1- and SHC1-binding. Phosphorylation of Ser-1280 by GSK-3beta restrains kinase activity and promotes cell surface expression, it requires a priming phosphorylation at Ser-1284. Dephosphorylated by PTPN1. In terms of processing, polyubiquitinated at Lys-1170 and Lys-1173 through both 'Lys-48' and 'Lys-29' linkages, promoting receptor endocytosis and subsequent degradation by the proteasome. Ubiquitination is facilitated by pre-existing phosphorylation. Sumoylated with SUMO1. Post-translationally, controlled by regulated intramembrane proteolysis (RIP). Undergoes metalloprotease-dependent constitutive ectodomain shedding to produce a membrane-anchored 52 kDa C-Terminal fragment which is further processed by presenilin gamma-secretase to yield an intracellular 50 kDa fragment.

Its subcellular location is the cell membrane. It catalyses the reaction L-tyrosyl-[protein] + ATP = O-phospho-L-tyrosyl-[protein] + ADP + H(+). Its activity is regulated as follows. Activated by autophosphorylation at Tyr-1163, Tyr-1167 and Tyr-1168 on the kinase activation loop; phosphorylation at all three tyrosine residues is required for optimal kinase activity. Inhibited by MSC1609119A-1, BMS-754807, PQIP, benzimidazole pyridinone, isoquinolinedione, bis-azaindole, 3-cyanoquinoline, 2,4-bis-arylamino-1,3-pyrimidine, pyrrolopyrimidine, pyrrole-5-carboxaldehyde, picropodophyllin (PPP), tyrphostin derivatives. While most inhibitors bind to the ATP binding pocket, MSC1609119A-1 functions as allosteric inhibitor and binds close to the DFG motif and the activation loop. Its function is as follows. Receptor tyrosine kinase which mediates actions of insulin-like growth factor 1 (IGF1). Binds IGF1 with high affinity and IGF2 and insulin (INS) with a lower affinity. The activated IGF1R is involved in cell growth and survival control. IGF1R is crucial for tumor transformation and survival of malignant cell. Ligand binding activates the receptor kinase, leading to receptor autophosphorylation, and tyrosines phosphorylation of multiple substrates, that function as signaling adapter proteins including, the insulin-receptor substrates (IRS1/2), Shc and 14-3-3 proteins. Phosphorylation of IRSs proteins lead to the activation of two main signaling pathways: the PI3K-AKT/PKB pathway and the Ras-MAPK pathway. The result of activating the MAPK pathway is increased cellular proliferation, whereas activating the PI3K pathway inhibits apoptosis and stimulates protein synthesis. Phosphorylated IRS1 can activate the 85 kDa regulatory subunit of PI3K (PIK3R1), leading to activation of several downstream substrates, including protein AKT/PKB. AKT phosphorylation, in turn, enhances protein synthesis through mTOR activation and triggers the antiapoptotic effects of IGFIR through phosphorylation and inactivation of BAD. In parallel to PI3K-driven signaling, recruitment of Grb2/SOS by phosphorylated IRS1 or Shc leads to recruitment of Ras and activation of the ras-MAPK pathway. In addition to these two main signaling pathways IGF1R signals also through the Janus kinase/signal transducer and activator of transcription pathway (JAK/STAT). Phosphorylation of JAK proteins can lead to phosphorylation/activation of signal transducers and activators of transcription (STAT) proteins. In particular activation of STAT3, may be essential for the transforming activity of IGF1R. The JAK/STAT pathway activates gene transcription and may be responsible for the transforming activity. JNK kinases can also be activated by the IGF1R. IGF1 exerts inhibiting activities on JNK activation via phosphorylation and inhibition of MAP3K5/ASK1, which is able to directly associate with the IGF1R. When present in a hybrid receptor with INSR, binds IGF1. This is Insulin-like growth factor 1 receptor (Igf1r) from Mus musculus (Mouse).